A 309-amino-acid polypeptide reads, in one-letter code: tRNA pseudouridine synthase B (309 aa).

Aspartate 39 (nucleophile) is an active-site residue.

Belongs to the pseudouridine synthase TruB family. Type 1 subfamily.

It carries out the reaction uridine(55) in tRNA = pseudouridine(55) in tRNA. Functionally, responsible for synthesis of pseudouridine from uracil-55 in the psi GC loop of transfer RNAs. In Bacillus pumilus (strain SAFR-032), this protein is tRNA pseudouridine synthase B.